A 383-amino-acid polypeptide reads, in one-letter code: 1-deoxy-D-xylulose 5-phosphate reductoisomerase (383 aa).

Thr-10, Gly-11, Ser-12, Ile-13, Gly-36, Arg-37, Asn-38, and Asn-122 together coordinate NADPH. Lys-123 is a 1-deoxy-D-xylulose 5-phosphate binding site. Glu-124 is a binding site for NADPH. Residue Asp-148 participates in Mn(2+) binding. 1-deoxy-D-xylulose 5-phosphate-binding residues include Ser-149, Glu-150, Ser-174, and His-197. Position 150 (Glu-150) interacts with Mn(2+). Gly-203 is a binding site for NADPH. Positions 210, 215, 216, and 219 each coordinate 1-deoxy-D-xylulose 5-phosphate. Glu-219 lines the Mn(2+) pocket.

This sequence belongs to the DXR family. The cofactor is Mg(2+). Requires Mn(2+) as cofactor.

It carries out the reaction 2-C-methyl-D-erythritol 4-phosphate + NADP(+) = 1-deoxy-D-xylulose 5-phosphate + NADPH + H(+). The protein operates within isoprenoid biosynthesis; isopentenyl diphosphate biosynthesis via DXP pathway; isopentenyl diphosphate from 1-deoxy-D-xylulose 5-phosphate: step 1/6. In terms of biological role, catalyzes the NADPH-dependent rearrangement and reduction of 1-deoxy-D-xylulose-5-phosphate (DXP) to 2-C-methyl-D-erythritol 4-phosphate (MEP). The chain is 1-deoxy-D-xylulose 5-phosphate reductoisomerase from Bacillus pumilus (strain SAFR-032).